Here is a 313-residue protein sequence, read N- to C-terminus: Porphobilinogen deaminase 2 (313 aa).

S-(dipyrrolylmethanemethyl)cysteine is present on C246.

This sequence belongs to the HMBS family. As to quaternary structure, monomer. Requires dipyrromethane as cofactor.

It catalyses the reaction 4 porphobilinogen + H2O = hydroxymethylbilane + 4 NH4(+). It participates in porphyrin-containing compound metabolism; protoporphyrin-IX biosynthesis; coproporphyrinogen-III from 5-aminolevulinate: step 2/4. Its function is as follows. Tetrapolymerization of the monopyrrole PBG into the hydroxymethylbilane pre-uroporphyrinogen in several discrete steps. This is Porphobilinogen deaminase 2 (hemC2) from Streptomyces coelicolor (strain ATCC BAA-471 / A3(2) / M145).